The primary structure comprises 456 residues: Nitrogenase molybdenum-iron protein beta chain (456 aa).

Residues Cys-23, Cys-48, Cys-106, and Ser-141 each contribute to the [8Fe-7S] cluster site.

This sequence belongs to the NifD/NifK/NifE/NifN family. Tetramer of two alpha and two beta chains. Forms complex with the iron protein (nitrogenase component 2). Requires [8Fe-7S] cluster as cofactor.

It catalyses the reaction N2 + 8 reduced [2Fe-2S]-[ferredoxin] + 16 ATP + 16 H2O = H2 + 8 oxidized [2Fe-2S]-[ferredoxin] + 2 NH4(+) + 16 ADP + 16 phosphate + 6 H(+). In terms of biological role, this molybdenum-iron protein is part of the nitrogenase complex that catalyzes the key enzymatic reactions in nitrogen fixation. This chain is Nitrogenase molybdenum-iron protein beta chain (nifK2), found in Methanosarcina barkeri.